The following is a 921-amino-acid chain: Guanylate kinase-associated protein mars (921 aa).

Ser-49 carries the phosphoserine modification. Phosphothreonine is present on Thr-51. Residues Ser-76 and Ser-170 each carry the phosphoserine modification. Tyr-172 is modified (phosphotyrosine). 2 disordered regions span residues 179–208 (GKGKAAEPIKPSIPKPTSAAAPPSSNTVAA) and 273–325 (RPTP…PLGN). Low complexity-rich tracts occupy residues 193–208 (KPTSAAAPPSSNTVAA) and 273–285 (RPTPATVTKAKTP). Position 444 is a phosphoserine (Ser-444). Residues 500-531 (QTTVKEDTGDSTLVPEGTKTPPRRESNGMPNY) are disordered. Thr-519 is modified (phosphothreonine). Position 554 is a phosphoserine (Ser-554). 2 disordered regions span residues 641 to 660 (AGATGKNSQPNDGSEDSKPV) and 743 to 763 (TKVEEPTLEDGLPATSSRHSS). Phosphoserine is present on residues Ser-785 and Ser-792. Disordered regions lie at residues 809-833 (QNAAKTPPPKPRTSILKTPGTTKRQ) and 861-921 (ETVG…SEFM). At Thr-826 the chain carries Phosphothreonine. The segment covering 878 to 907 (EASTESGSLEQNPGRDSNQENEATPRTYTL) has biased composition (polar residues).

It belongs to the SAPAP family. As to expression, expressed in the central nervous system and at different stages of gametogenesis. In embryos, it is expressed in central nervous system and brain. In testis, it is strongly expressed in pre-meiotic germ cells, but is not found in somatic or post-meiotic cells.

Its subcellular location is the cell membrane. The protein localises to the nucleus. The protein resides in the nucleoplasm. It is found in the cytoplasm. It localises to the cytoskeleton. Its subcellular location is the spindle. In terms of biological role, cell cycle regulator. In Drosophila melanogaster (Fruit fly), this protein is Guanylate kinase-associated protein mars (mars).